A 682-amino-acid chain; its full sequence is Potassium-transporting ATPase ATP-binding subunit (682 aa).

The next 4 helical transmembrane spans lie at 34–54 (PVMF…LAMV), 62–82 (ALFT…ANFA), 219–239 (IALT…TATL), and 254–274 (VLVA…LSAI). The active-site 4-aspartylphosphate intermediate is Asp-307. ATP-binding positions include Asp-344, Glu-348, 377–384 (FTAQSRMS), and Lys-395. Asp-518 and Asp-522 together coordinate Mg(2+). Helical transmembrane passes span 588-608 (FAII…LNVM), 616-636 (AILS…PLAL), and 662-682 (LVVP…LGLA).

It belongs to the cation transport ATPase (P-type) (TC 3.A.3) family. Type IA subfamily. The system is composed of three essential subunits: KdpA, KdpB and KdpC.

Its subcellular location is the cell inner membrane. The enzyme catalyses K(+)(out) + ATP + H2O = K(+)(in) + ADP + phosphate + H(+). Functionally, part of the high-affinity ATP-driven potassium transport (or Kdp) system, which catalyzes the hydrolysis of ATP coupled with the electrogenic transport of potassium into the cytoplasm. This subunit is responsible for energy coupling to the transport system and for the release of the potassium ions to the cytoplasm. This Salmonella schwarzengrund (strain CVM19633) protein is Potassium-transporting ATPase ATP-binding subunit.